A 64-amino-acid chain; its full sequence is Beta-toxin Tf1 (64 aa).

An LCN-type CS-alpha/beta domain is found at 1 to 62 (KEGYLMDHEG…VWERATNRCG (62 aa)). Cystine bridges form between Cys-11–Cys-61, Cys-15–Cys-37, Cys-23–Cys-42, and Cys-27–Cys-44. The residue at position 61 (Cys-61) is a Cysteine amide.

The protein belongs to the long (4 C-C) scorpion toxin superfamily. Sodium channel inhibitor family. Beta subfamily. Expressed by the venom gland.

Its subcellular location is the secreted. In terms of biological role, beta toxins bind voltage-independently at site-4 of sodium channels (Nav) and shift the voltage of activation toward more negative potentials thereby affecting sodium channel activation and promoting spontaneous and repetitive firing. The sequence is that of Beta-toxin Tf1 from Tityus fasciolatus (Central Brazilian scorpion).